The chain runs to 325 residues: DNA-directed RNA polymerase subunit alpha (325 aa).

The tract at residues 1 to 231 is alpha N-terminal domain (alpha-NTD); the sequence is MQNSLLKPRI…DQLNVFAALE (231 aa). An alpha C-terminal domain (alpha-CTD) region spans residues 246–325; it reads VDPILLRPVD…ENWPPAGLEK (80 aa).

Belongs to the RNA polymerase alpha chain family. As to quaternary structure, homodimer. The RNAP catalytic core consists of 2 alpha, 1 beta, 1 beta' and 1 omega subunit. When a sigma factor is associated with the core the holoenzyme is formed, which can initiate transcription.

It catalyses the reaction RNA(n) + a ribonucleoside 5'-triphosphate = RNA(n+1) + diphosphate. DNA-dependent RNA polymerase catalyzes the transcription of DNA into RNA using the four ribonucleoside triphosphates as substrates. The sequence is that of DNA-directed RNA polymerase subunit alpha from Herminiimonas arsenicoxydans.